A 365-amino-acid polypeptide reads, in one-letter code: uncharacterized protein (365 aa).

Residues 18-46 adopt a coiled-coil conformation; that stretch reads TAQEALTLIEKLDSDYKEKEEKITALSVH.

This is an uncharacterized protein from Bacillus subtilis (strain 168).